Consider the following 361-residue polypeptide: UDP-N-acetylglucosamine--N-acetylmuramyl-(pentapeptide) pyrophosphoryl-undecaprenol N-acetylglucosamine transferase (361 aa).

Residues 13–15 (TGG), Asn125, Arg167, Ser196, Ile251, 270–275 (ALTVTE), and Gln296 each bind UDP-N-acetyl-alpha-D-glucosamine.

Belongs to the glycosyltransferase 28 family. MurG subfamily.

The protein resides in the cell inner membrane. It carries out the reaction di-trans,octa-cis-undecaprenyl diphospho-N-acetyl-alpha-D-muramoyl-L-alanyl-D-glutamyl-meso-2,6-diaminopimeloyl-D-alanyl-D-alanine + UDP-N-acetyl-alpha-D-glucosamine = di-trans,octa-cis-undecaprenyl diphospho-[N-acetyl-alpha-D-glucosaminyl-(1-&gt;4)]-N-acetyl-alpha-D-muramoyl-L-alanyl-D-glutamyl-meso-2,6-diaminopimeloyl-D-alanyl-D-alanine + UDP + H(+). Its pathway is cell wall biogenesis; peptidoglycan biosynthesis. Its function is as follows. Cell wall formation. Catalyzes the transfer of a GlcNAc subunit on undecaprenyl-pyrophosphoryl-MurNAc-pentapeptide (lipid intermediate I) to form undecaprenyl-pyrophosphoryl-MurNAc-(pentapeptide)GlcNAc (lipid intermediate II). This chain is UDP-N-acetylglucosamine--N-acetylmuramyl-(pentapeptide) pyrophosphoryl-undecaprenol N-acetylglucosamine transferase, found in Psychrobacter cryohalolentis (strain ATCC BAA-1226 / DSM 17306 / VKM B-2378 / K5).